Here is a 904-residue protein sequence, read N- to C-terminus: Protein translocase subunit SecA (904 aa).

ATP contacts are provided by residues glutamine 89, 107-111 (GEGKT), and aspartate 502. Positions 888, 890, 899, and 900 each coordinate Zn(2+).

Belongs to the SecA family. As to quaternary structure, monomer and homodimer. Part of the essential Sec protein translocation apparatus which comprises SecA, SecYEG and auxiliary proteins SecDF-YajC and YidC. Zn(2+) serves as cofactor.

The protein localises to the cell inner membrane. Its subcellular location is the cytoplasm. The catalysed reaction is ATP + H2O + cellular proteinSide 1 = ADP + phosphate + cellular proteinSide 2.. Its function is as follows. Part of the Sec protein translocase complex. Interacts with the SecYEG preprotein conducting channel. Has a central role in coupling the hydrolysis of ATP to the transfer of proteins into and across the cell membrane, serving both as a receptor for the preprotein-SecB complex and as an ATP-driven molecular motor driving the stepwise translocation of polypeptide chains across the membrane. This Roseobacter denitrificans (strain ATCC 33942 / OCh 114) (Erythrobacter sp. (strain OCh 114)) protein is Protein translocase subunit SecA.